We begin with the raw amino-acid sequence, 271 residues long: 3-methyl-2-oxobutanoate hydroxymethyltransferase (271 aa).

Positions 53 and 92 each coordinate Mg(2+). 3-methyl-2-oxobutanoate-binding positions include 53–54 (DS), aspartate 92, and lysine 120. Glutamate 122 contributes to the Mg(2+) binding site. The Proton acceptor role is filled by glutamate 189.

It belongs to the PanB family. In terms of assembly, homodecamer; pentamer of dimers. It depends on Mg(2+) as a cofactor.

It localises to the cytoplasm. The enzyme catalyses 3-methyl-2-oxobutanoate + (6R)-5,10-methylene-5,6,7,8-tetrahydrofolate + H2O = 2-dehydropantoate + (6S)-5,6,7,8-tetrahydrofolate. Its pathway is cofactor biosynthesis; (R)-pantothenate biosynthesis; (R)-pantoate from 3-methyl-2-oxobutanoate: step 1/2. Its function is as follows. Catalyzes the reversible reaction in which hydroxymethyl group from 5,10-methylenetetrahydrofolate is transferred onto alpha-ketoisovalerate to form ketopantoate. The polypeptide is 3-methyl-2-oxobutanoate hydroxymethyltransferase (Burkholderia multivorans (strain ATCC 17616 / 249)).